Here is a 191-residue protein sequence, read N- to C-terminus: Cathelicidin-related antimicrobial peptide Na_CRAMP (191 aa).

Positions 1–22 (MEGFFWKTLLVVGALTISGTSS) are cleaved as a signal peptide. Positions 23–161 (FPHKPLTYEE…DQPKRVKRFK (139 aa)) are excised as a propeptide. 2 disulfide bridges follow: Cys81-Cys92 and Cys103-Cys120. The segment at 126–154 (EEEQKQEEGNEEEKEVEKEEKEEDQKDQP) is disordered. Basic and acidic residues predominate over residues 140 to 154 (EVEKEEKEEDQKDQP).

Belongs to the cathelicidin family. As to expression, expressed by the venom gland.

Its subcellular location is the secreted. The protein resides in the target cell membrane. Functionally, potent antimicrobial peptide against most of Gram-negative bacteria, some Gram-positive bacteria (Bacillus) and some fungi. Adopts an amphipathic alpha helical conformation, that may allow to partition into the target membrane. No hemolytic and cytotoxic activities have been observed on mammalian cells. This is Cathelicidin-related antimicrobial peptide Na_CRAMP from Naja atra (Chinese cobra).